A 139-amino-acid chain; its full sequence is Phosphoribosyl-AMP cyclohydrolase (139 aa).

Residue aspartate 95 coordinates Mg(2+). Residue cysteine 96 participates in Zn(2+) binding. 2 residues coordinate Mg(2+): aspartate 97 and aspartate 99. Zn(2+) is bound by residues cysteine 114 and cysteine 121.

The protein belongs to the PRA-CH family. As to quaternary structure, homodimer. The cofactor is Mg(2+). Zn(2+) serves as cofactor.

The protein localises to the cytoplasm. It catalyses the reaction 1-(5-phospho-beta-D-ribosyl)-5'-AMP + H2O = 1-(5-phospho-beta-D-ribosyl)-5-[(5-phospho-beta-D-ribosylamino)methylideneamino]imidazole-4-carboxamide. It functions in the pathway amino-acid biosynthesis; L-histidine biosynthesis; L-histidine from 5-phospho-alpha-D-ribose 1-diphosphate: step 3/9. Its function is as follows. Catalyzes the hydrolysis of the adenine ring of phosphoribosyl-AMP. The chain is Phosphoribosyl-AMP cyclohydrolase from Chelativorans sp. (strain BNC1).